The primary structure comprises 325 residues: Fe-S cluster assembly protein DRE2 (325 aa).

The interval 1 to 169 (MTLGDRLGLI…KKKDAGNNEQ (169 aa)) is N-terminal SAM-like domain. The tract at residues 170 to 222 (VVKLSVEDVEDDLDDDPEVSNELLSKAKFFNSLSLNQDAEIDENNLIKSTDGD) is linker. Residues C229, C240, C243, and C245 each contribute to the [2Fe-2S] cluster site. Residues 229 to 245 (CGKTNTKKRRACKDCTC) form a fe-S binding site A region. Positions 288, 291, 299, and 302 each coordinate [4Fe-4S] cluster. 2 consecutive short sequence motifs (cx2C motif) follow at residues 288 to 291 (CGSC) and 299 to 302 (CSGC). Residues 288–302 (CGSCSLGDAFRCSGC) are fe-S binding site B.

Belongs to the anamorsin family. Monomer. Interacts with TAH18. Interacts with MIA40. [2Fe-2S] cluster serves as cofactor. [4Fe-4S] cluster is required as a cofactor.

The protein resides in the cytoplasm. Its subcellular location is the mitochondrion intermembrane space. Functionally, component of the cytosolic iron-sulfur (Fe-S) protein assembly (CIA) machinery required for the maturation of extramitochondrial Fe-S proteins. Part of an electron transfer chain functioning in an early step of cytosolic Fe-S biogenesis, facilitating the de novo assembly of a [4Fe-4S] cluster on the scaffold complex CFD1-NBP35. Electrons are transferred to DRE2 from NADPH via the FAD- and FMN-containing protein TAH18. TAH18-DRE2 are also required for the assembly of the diferric tyrosyl radical cofactor of ribonucleotide reductase (RNR), probably by providing electrons for reduction during radical cofactor maturation in the catalytic small subunit RNR2. This is Fe-S cluster assembly protein DRE2 from Vanderwaltozyma polyspora (strain ATCC 22028 / DSM 70294 / BCRC 21397 / CBS 2163 / NBRC 10782 / NRRL Y-8283 / UCD 57-17) (Kluyveromyces polysporus).